A 336-amino-acid chain; its full sequence is UDP-galactose transporter 1 (336 aa).

The next 9 membrane-spanning stretches (helical) occupy residues 11 to 31, 38 to 58, 83 to 103, 131 to 151, 154 to 174, 193 to 213, 227 to 247, 254 to 274, and 278 to 298; these read LAILQWWGFNVTVIIMNKWIF, FPLSVSCVHFICSSIGAYIVI, FVFCINIVLGNVSLRYIPVSF, IWASLVPIVGGILLTSVTELS, MFGFCAALFGCLATSTKTILA, APFATMILGIPALLLEGSGIL, IIILSSGVLAFCLNFSIFYVI, TFNVAGNLKVAVAVMVSWLIF, and ISYMNAVGCGITLVGCTFYGY.

The protein belongs to the TPT transporter family. TPT (TC 2.A.7.9) subfamily.

Its subcellular location is the membrane. Functionally, nucleotide sugar transporter that specifically transports UDP-galactose. This is UDP-galactose transporter 1 from Arabidopsis thaliana (Mouse-ear cress).